Here is a 188-residue protein sequence, read N- to C-terminus: MKVGLVYYGGQYNHLILKNVKYLGADIEVIPPHKPVEELKKFDCVIFSGGPYSVSEEIQKMGNSPLYIKELKVPMLGICLGHQLIAYVLGGVVRRALNPEYGLTRINIFDEDTILKGFSQQLNVWESHNDEVVEPPSGFRVLASSANARVQAMANSSNSIFGVQFHPEVKHTERGIEIFKNFLGVCRK.

One can recognise a Glutamine amidotransferase type-1 domain in the interval 2-188 (KVGLVYYGGQ…FKNFLGVCRK (187 aa)). C79 (nucleophile) is an active-site residue. Catalysis depends on residues H166 and E168.

As to quaternary structure, heterodimer composed of a glutamine amidotransferase subunit (A) and a GMP-binding subunit (B).

The enzyme catalyses XMP + L-glutamine + ATP + H2O = GMP + L-glutamate + AMP + diphosphate + 2 H(+). Its pathway is purine metabolism; GMP biosynthesis; GMP from XMP (L-Gln route): step 1/1. Functionally, catalyzes the synthesis of GMP from XMP. The polypeptide is GMP synthase [glutamine-hydrolyzing] subunit A (Saccharolobus solfataricus (strain ATCC 35092 / DSM 1617 / JCM 11322 / P2) (Sulfolobus solfataricus)).